The primary structure comprises 93 residues: Alpha-defensin 23 (93 aa).

An N-terminal signal peptide occupies residues 1 to 19 (MKTLVLLSALILLAFQVQA). Residues 20 to 58 (DPIQNTDEETKTEEQPGKEDQAVSVSFGDPEGSSLQEES) constitute a propeptide that is removed on maturation. The tract at residues 24–54 (NTDEETKTEEQPGKEDQAVSVSFGDPEGSSL) is disordered. The span at 27-40 (EETKTEEQPGKEDQ) shows a compositional bias: basic and acidic residues. Intrachain disulfides connect Cys-64–Cys-92, Cys-66–Cys-81, and Cys-71–Cys-91.

It belongs to the alpha-defensin family.

The protein localises to the secreted. In terms of biological role, may have microbicidal activities. This chain is Alpha-defensin 23 (Defa23), found in Mus musculus (Mouse).